The following is a 91-amino-acid chain: MPRSLKKGPFIDAHLFAKVEKAVESNSRKPIKTWSRRSMILPQMVGLTISVHNGRTHVPVIISEQMVGHKLGEFAPTRTYRGHGFDKKAKK.

It belongs to the universal ribosomal protein uS19 family.

In terms of biological role, protein S19 forms a complex with S13 that binds strongly to the 16S ribosomal RNA. This chain is Small ribosomal subunit protein uS19, found in Psychrobacter sp. (strain PRwf-1).